Reading from the N-terminus, the 142-residue chain is Hemoglobin subunit alpha-1 (142 aa).

At Ser-1 the chain carries N-acetylserine. The region spanning 1–142 (SLSDKDKAAV…VALALAERYR (142 aa)) is the Globin domain. Residue His-59 participates in O2 binding. Position 88 (His-88) interacts with heme b.

The protein belongs to the globin family. Hb1 is a heterotetramer of two alpha-1 chains and two beta chains. HbC is a heterotetramer of two alpha-1 chains and two beta-C chains. As to expression, red blood cells.

Functionally, involved in oxygen transport from gills to the various peripheral tissues. The chain is Hemoglobin subunit alpha-1 (hba1) from Trematomus newnesi (Dusky notothen).